Here is a 554-residue protein sequence, read N- to C-terminus: MLQISLWKRLVILGLCLAALITAAPNMFYARVEGHNDAVSAFEKTGAMTETQEAAKAAWPDWAPSALVNLGLDLRGGAHLLAEVHLGEVYKARMDALWPEVRKVLAAERATIGAIRRVPSPEGELRIQIGERAQIARAVEVARTLASPVVSLTGVGQTDYEVTGEGDTVVFRLSEAEKKATDDRTMQQSLEIVRRRVDAAGTREPTIMREGTDRILIEVPGIGSAQELKDLIGTTAKLTFHPVLSTTSNPNAPVASGNELLPDAERQGLYHLLDEVPVVTGDDLTDARPTTDDNGAPAVSFRFNVSGARAFGDYTAGHIGEPFAIVLDGKVISAPTIQAHIAGGSGIITGRFSIEEATDLALLLRAGALPAGMTFLEERTIGPELGADSVKAGMVASVIGFVAVVAYMIASYGLFGFFSSVALFINIAFIFAVMGAIGGTMTLPGIAGIVLTIGTSVDANVLIYERMREEIRSGKSPVRAIELGFDKAMSAIIDANVTSFLSSAILFVLGAGPVRGFAVTTMIGIAASIFTAIWVVRLMIVIWYGWRRPKTIVI.

Helical transmembrane passes span 10–30 (LVILGLCLAALITAAPNMFYA), 392–412 (AGMVASVIGFVAVVAYMIASY), 414–434 (LFGFFSSVALFINIAFIFAVM), 435–455 (GAIGGTMTLPGIAGIVLTIGT), 491–511 (AIIDANVTSFLSSAILFVLGA), and 516–536 (GFAVTTMIGIAASIFTAIWVV).

Belongs to the SecD/SecF family. SecD subfamily. As to quaternary structure, forms a complex with SecF. Part of the essential Sec protein translocation apparatus which comprises SecA, SecYEG and auxiliary proteins SecDF-YajC and YidC.

It is found in the cell inner membrane. In terms of biological role, part of the Sec protein translocase complex. Interacts with the SecYEG preprotein conducting channel. SecDF uses the proton motive force (PMF) to complete protein translocation after the ATP-dependent function of SecA. This Rhodobacter capsulatus (strain ATCC BAA-309 / NBRC 16581 / SB1003) protein is Protein translocase subunit SecD.